Reading from the N-terminus, the 291-residue chain is Elongation factor Ts (291 aa).

The segment at T79–V82 is involved in Mg(2+) ion dislocation from EF-Tu.

This sequence belongs to the EF-Ts family.

The protein localises to the cytoplasm. Its function is as follows. Associates with the EF-Tu.GDP complex and induces the exchange of GDP to GTP. It remains bound to the aminoacyl-tRNA.EF-Tu.GTP complex up to the GTP hydrolysis stage on the ribosome. The polypeptide is Elongation factor Ts (Leuconostoc mesenteroides subsp. mesenteroides (strain ATCC 8293 / DSM 20343 / BCRC 11652 / CCM 1803 / JCM 6124 / NCDO 523 / NBRC 100496 / NCIMB 8023 / NCTC 12954 / NRRL B-1118 / 37Y)).